The chain runs to 297 residues: Mitochondrial nicotinamide adenine dinucleotide transporter SLC25A51 (297 aa).

Positions 1–11 (MMDSEAHEKRP) are enriched in basic and acidic residues. The segment at 1–20 (MMDSEAHEKRPPILTSSKQD) is disordered. Solcar repeat units follow at residues 28–108 (VGEM…LSCL), 116–200 (PEFA…IKEH), and 213–296 (NDFI…LLKV). The next 6 membrane-spanning stretches (helical) occupy residues 36–56 (CGCC…KVLF), 85–105 (LPPL…YEDL), 116–135 (PEFA…EAIF), 179–199 (ILFR…PIKE), 215–235 (FICG…INVV), and 268–289 (LFRG…INAT).

Belongs to the mitochondrial carrier (TC 2.A.29) family.

The protein resides in the mitochondrion inner membrane. The enzyme catalyses NAD(+)(in) = NAD(+)(out). Mitochondrial membrane carrier protein that mediates the import of NAD(+) into mitochondria. Mitochondrial NAD(+) is required for glycolysis and mitochondrial respiration. Compared to SLC25A52, SLC25A51-mediated transport is essential for the import of NAD(+) in mitochondria. The transport mechanism, uniport or antiport, its electrogenicity and substrate selectivity, remain to be elucidated. The sequence is that of Mitochondrial nicotinamide adenine dinucleotide transporter SLC25A51 from Homo sapiens (Human).